The following is a 315-amino-acid chain: 4-hydroxy-3-methylbut-2-enyl diphosphate reductase (315 aa).

A [4Fe-4S] cluster-binding site is contributed by Cys12. Residues His41 and His74 each contribute to the (2E)-4-hydroxy-3-methylbut-2-enyl diphosphate site. Residues His41 and His74 each contribute to the dimethylallyl diphosphate site. Residues His41 and His74 each contribute to the isopentenyl diphosphate site. Cys96 is a [4Fe-4S] cluster binding site. Position 124 (His124) interacts with (2E)-4-hydroxy-3-methylbut-2-enyl diphosphate. His124 is a dimethylallyl diphosphate binding site. Residue His124 coordinates isopentenyl diphosphate. Glu126 acts as the Proton donor in catalysis. Thr168 serves as a coordination point for (2E)-4-hydroxy-3-methylbut-2-enyl diphosphate. [4Fe-4S] cluster is bound at residue Cys198. (2E)-4-hydroxy-3-methylbut-2-enyl diphosphate-binding residues include Ser226, Ser227, Asn228, and Ser270. Residues Ser226, Ser227, Asn228, and Ser270 each coordinate dimethylallyl diphosphate. Ser226, Ser227, Asn228, and Ser270 together coordinate isopentenyl diphosphate.

Belongs to the IspH family. Requires [4Fe-4S] cluster as cofactor.

It carries out the reaction isopentenyl diphosphate + 2 oxidized [2Fe-2S]-[ferredoxin] + H2O = (2E)-4-hydroxy-3-methylbut-2-enyl diphosphate + 2 reduced [2Fe-2S]-[ferredoxin] + 2 H(+). The enzyme catalyses dimethylallyl diphosphate + 2 oxidized [2Fe-2S]-[ferredoxin] + H2O = (2E)-4-hydroxy-3-methylbut-2-enyl diphosphate + 2 reduced [2Fe-2S]-[ferredoxin] + 2 H(+). Its pathway is isoprenoid biosynthesis; dimethylallyl diphosphate biosynthesis; dimethylallyl diphosphate from (2E)-4-hydroxy-3-methylbutenyl diphosphate: step 1/1. It participates in isoprenoid biosynthesis; isopentenyl diphosphate biosynthesis via DXP pathway; isopentenyl diphosphate from 1-deoxy-D-xylulose 5-phosphate: step 6/6. Catalyzes the conversion of 1-hydroxy-2-methyl-2-(E)-butenyl 4-diphosphate (HMBPP) into a mixture of isopentenyl diphosphate (IPP) and dimethylallyl diphosphate (DMAPP). Acts in the terminal step of the DOXP/MEP pathway for isoprenoid precursor biosynthesis. In Pseudomonas fluorescens (strain SBW25), this protein is 4-hydroxy-3-methylbut-2-enyl diphosphate reductase.